Consider the following 218-residue polypeptide: Probable 2-aminoethanethiol dioxygenase (218 aa).

Fe cation is required as a cofactor.

It carries out the reaction cysteamine + O2 = hypotaurine + H(+). This chain is Probable 2-aminoethanethiol dioxygenase (ado-1), found in Dictyostelium discoideum (Social amoeba).